The sequence spans 612 residues: DNA mismatch repair protein MutL (612 aa).

Belongs to the DNA mismatch repair MutL/HexB family.

In terms of biological role, this protein is involved in the repair of mismatches in DNA. It is required for dam-dependent methyl-directed DNA mismatch repair. May act as a 'molecular matchmaker', a protein that promotes the formation of a stable complex between two or more DNA-binding proteins in an ATP-dependent manner without itself being part of a final effector complex. This Bartonella quintana (strain Toulouse) (Rochalimaea quintana) protein is DNA mismatch repair protein MutL.